The sequence spans 212 residues: Endonuclease III (212 aa).

The HhH domain occupies Phe-108–Asn-127. [4Fe-4S] cluster contacts are provided by Cys-187, Cys-194, Cys-197, and Cys-203.

It belongs to the Nth/MutY family. [4Fe-4S] cluster serves as cofactor.

It carries out the reaction 2'-deoxyribonucleotide-(2'-deoxyribose 5'-phosphate)-2'-deoxyribonucleotide-DNA = a 3'-end 2'-deoxyribonucleotide-(2,3-dehydro-2,3-deoxyribose 5'-phosphate)-DNA + a 5'-end 5'-phospho-2'-deoxyribonucleoside-DNA + H(+). In terms of biological role, DNA repair enzyme that has both DNA N-glycosylase activity and AP-lyase activity. The DNA N-glycosylase activity releases various damaged pyrimidines from DNA by cleaving the N-glycosidic bond, leaving an AP (apurinic/apyrimidinic) site. The AP-lyase activity cleaves the phosphodiester bond 3' to the AP site by a beta-elimination, leaving a 3'-terminal unsaturated sugar and a product with a terminal 5'-phosphate. The sequence is that of Endonuclease III from Rickettsia prowazekii (strain Madrid E).